Consider the following 691-residue polypeptide: DNA ligase (691 aa).

NAD(+) is bound by residues 41-45, 90-91, and Glu130; these read DAEYD and SL. The active-site N6-AMP-lysine intermediate is Lys132. 4 residues coordinate NAD(+): Arg153, Glu190, Lys307, and Lys331. Cys425, Cys428, Cys443, and Cys449 together coordinate Zn(2+). Positions 610 to 691 constitute a BRCT domain; sequence APQGVLAGKT…MHTLLEGHAR (82 aa).

The protein belongs to the NAD-dependent DNA ligase family. LigA subfamily. The cofactor is Mg(2+). Mn(2+) serves as cofactor.

It catalyses the reaction NAD(+) + (deoxyribonucleotide)n-3'-hydroxyl + 5'-phospho-(deoxyribonucleotide)m = (deoxyribonucleotide)n+m + AMP + beta-nicotinamide D-nucleotide.. In terms of biological role, DNA ligase that catalyzes the formation of phosphodiester linkages between 5'-phosphoryl and 3'-hydroxyl groups in double-stranded DNA using NAD as a coenzyme and as the energy source for the reaction. It is essential for DNA replication and repair of damaged DNA. The sequence is that of DNA ligase from Burkholderia pseudomallei (strain K96243).